The sequence spans 221 residues: Transmembrane emp24 domain-containing protein 3 (221 aa).

Residues 1-25 (MVHEAPHASSFQMLLQLLLLLLLRA) form the signal peptide. Residues 28 to 184 (LRSAELTFEL…RAEDLNSRVS (157 aa)) lie on the Lumenal side of the membrane. Positions 42–124 (KQCFHEEVEQ…HKTVYFDFQV (83 aa)) constitute a GOLD domain. Residue arginine 103 is modified to Dimethylated arginine. Residues 185–205 (YWSVGETIALFVVSFSQVLLL) form a helical membrane-spanning segment. Residues 206-221 (KSFFTEKRPVNRAVHS) lie on the Cytoplasmic side of the membrane. The short motif at 208 to 209 (FF) is the COPII vesicle coat-binding element. Residues 208–221 (FFTEKRPVNRAVHS) carry the COPI vesicle coat-binding motif.

This sequence belongs to the EMP24/GP25L family. Monomer in endoplasmic reticulum, endoplasmic reticulum-Golgi intermediate compartment and cis-Golgi network. Interacts (via C-terminus) with COPG1; the interaction involves dimeric TMED3; however, there are conflicting reports on the interaction. Interacts with GORASP1 and GORASP2.

The protein resides in the endoplasmic reticulum-Golgi intermediate compartment membrane. It is found in the golgi apparatus. It localises to the cis-Golgi network membrane. Its subcellular location is the golgi stack membrane. The protein localises to the endoplasmic reticulum membrane. The protein resides in the cytoplasmic vesicle. It is found in the COPI-coated vesicle membrane. In terms of biological role, potential role in vesicular protein trafficking, mainly in the early secretory pathway. Contributes to the coupled localization of TMED2 and TMED10 in the cis-Golgi network. This Mus musculus (Mouse) protein is Transmembrane emp24 domain-containing protein 3 (Tmed3).